The sequence spans 215 residues: UPF0502 protein PputGB1_3531 (215 aa).

It belongs to the UPF0502 family.

This Pseudomonas putida (strain GB-1) protein is UPF0502 protein PputGB1_3531.